The sequence spans 107 residues: Colipase (107 aa).

A signal peptide spans 1–17 (MEKVLVLLLVALSVAYA). A propeptide spans 18-22 (APGPR) (enterostatin, activation peptide). 5 disulfides stabilise this stretch: C34-C45, C40-C56, C44-C78, C66-C86, and C80-C104.

It belongs to the colipase family. In terms of assembly, forms a 1:1 stoichiometric complex with pancreatic lipase. In terms of tissue distribution, expressed by the pancreas.

It localises to the secreted. Functionally, colipase is a cofactor of pancreatic lipase. It allows the lipase to anchor itself to the lipid-water interface. Without colipase the enzyme is washed off by bile salts, which have an inhibitory effect on the lipase. In terms of biological role, enterostatin has a biological activity as a satiety signal. This Oryctolagus cuniculus (Rabbit) protein is Colipase (CLPS).